Here is a 37-residue protein sequence, read N- to C-terminus: Large ribosomal subunit protein bL36 (37 aa).

It belongs to the bacterial ribosomal protein bL36 family.

This chain is Large ribosomal subunit protein bL36, found in Magnetococcus marinus (strain ATCC BAA-1437 / JCM 17883 / MC-1).